Here is a 150-residue protein sequence, read N- to C-terminus: C-type lectin 16 (150 aa).

The signal sequence occupies residues 1–27 (MKRVRVKVIFVSFGLLVVFLSLSGTAA). Disulfide bonds link C29/C40, C57/C146, and C123/C138. The C-type lectin domain maps to 36-147 (YEGHCYKPFN…CRMLARFVCE (112 aa)).

Belongs to the snaclec family. In terms of assembly, heteromultimer; disulfide-linked. As to expression, expressed by the venom gland.

Its subcellular location is the secreted. Functionally, interferes with one step of hemostasis (modulation of platelet aggregation, or coagulation cascade, for example). This chain is C-type lectin 16, found in Crotalus adamanteus (Eastern diamondback rattlesnake).